Reading from the N-terminus, the 822-residue chain is Probable alpha,alpha-trehalose-phosphate synthase [UDP-forming] 2 (822 aa).

Residues 12–479 (PRLLVVANRL…GLDFMSELNG (468 aa)) are glycosyltransferase.

It in the N-terminal section; belongs to the glycosyltransferase 20 family. The protein in the C-terminal section; belongs to the trehalose phosphatase family.

The catalysed reaction is D-glucose 6-phosphate + UDP-alpha-D-glucose = alpha,alpha-trehalose 6-phosphate + UDP + H(+). This Arabidopsis thaliana (Mouse-ear cress) protein is Probable alpha,alpha-trehalose-phosphate synthase [UDP-forming] 2 (TPS2).